A 347-amino-acid chain; its full sequence is Holliday junction branch migration complex subunit RuvB (347 aa).

The interval 1–185 (MSDDPTTPEL…FGFTAHLEFY (185 aa)) is large ATPase domain (RuvB-L). ATP-binding positions include L24, R25, G66, K69, T70, T71, 132 to 134 (EDF), R175, Y185, and R222. T70 provides a ligand contact to Mg(2+). The small ATPAse domain (RuvB-S) stretch occupies residues 186–255 (DEGELAQVLA…AVHAALELYD (70 aa)). The segment at 258–347 (ELGLDRLDRA…SQPPSLMDDL (90 aa)) is head domain (RuvB-H). 2 residues coordinate DNA: R313 and R318.

The protein belongs to the RuvB family. Homohexamer. Forms an RuvA(8)-RuvB(12)-Holliday junction (HJ) complex. HJ DNA is sandwiched between 2 RuvA tetramers; dsDNA enters through RuvA and exits via RuvB. An RuvB hexamer assembles on each DNA strand where it exits the tetramer. Each RuvB hexamer is contacted by two RuvA subunits (via domain III) on 2 adjacent RuvB subunits; this complex drives branch migration. In the full resolvosome a probable DNA-RuvA(4)-RuvB(12)-RuvC(2) complex forms which resolves the HJ.

The protein localises to the cytoplasm. The enzyme catalyses ATP + H2O = ADP + phosphate + H(+). Functionally, the RuvA-RuvB-RuvC complex processes Holliday junction (HJ) DNA during genetic recombination and DNA repair, while the RuvA-RuvB complex plays an important role in the rescue of blocked DNA replication forks via replication fork reversal (RFR). RuvA specifically binds to HJ cruciform DNA, conferring on it an open structure. The RuvB hexamer acts as an ATP-dependent pump, pulling dsDNA into and through the RuvAB complex. RuvB forms 2 homohexamers on either side of HJ DNA bound by 1 or 2 RuvA tetramers; 4 subunits per hexamer contact DNA at a time. Coordinated motions by a converter formed by DNA-disengaged RuvB subunits stimulates ATP hydrolysis and nucleotide exchange. Immobilization of the converter enables RuvB to convert the ATP-contained energy into a lever motion, pulling 2 nucleotides of DNA out of the RuvA tetramer per ATP hydrolyzed, thus driving DNA branch migration. The RuvB motors rotate together with the DNA substrate, which together with the progressing nucleotide cycle form the mechanistic basis for DNA recombination by continuous HJ branch migration. Branch migration allows RuvC to scan DNA until it finds its consensus sequence, where it cleaves and resolves cruciform DNA. The polypeptide is Holliday junction branch migration complex subunit RuvB (Leifsonia xyli subsp. xyli (strain CTCB07)).